A 645-amino-acid chain; its full sequence is Pro-neuregulin-1, membrane-bound isoform (645 aa).

Positions M1–G19 are excised as a propeptide. The interval M1 to K52 is disordered. At S20–R247 the chain is on the extracellular side. The 92-residue stretch at P37–T128 folds into the Ig-like C2-type domain. The cysteines at positions 57 and 112 are disulfide-linked. A compositionally biased stretch (polar residues) spans M139–N164. The interval M139–G175 is disordered. The span at T165–G175 shows a compositional bias: low complexity. An EGF-like domain is found at H178–Q222. 3 cysteine pairs are disulfide-bonded: C182/C196, C190/C210, and C212/C221. Residues V248–A268 form a helical membrane-spanning segment. The Cytoplasmic portion of the chain corresponds to Y269–V645. Positions S340–T355 are enriched in low complexity. Disordered stretches follow at residues S340–H364, S380–C406, M433–S463, and E531–F593. Residues G392–G402 are compositionally biased toward gly residues. Basic residues predominate over residues T547 to P557. The segment covering D568–E579 has biased composition (low complexity).

Belongs to the neuregulin family. The cytoplasmic domain interacts with the LIM domain region of LIMK1. Forms a ternary complex with ERBB3 and ITGAV:ITGB3 or ITGA6:ITGB4. Interacts with NRDC and BACE1. Proteolytic cleavage close to the plasma membrane on the external face leads to the release of the soluble growth factor form. Post-translationally, N- and O-glycosylated. Extensive glycosylation precedes the proteolytic cleavage.

It localises to the cell membrane. The protein localises to the secreted. Functionally, direct ligand for ERBB3 and ERBB4 tyrosine kinase receptors. Concomitantly recruits ERBB1 and ERBB2 coreceptors, resulting in ligand-stimulated tyrosine phosphorylation and activation of the ERBB receptors. Perform diverse functions such as inducing growth and differentiation of epithelial, glial, neuronal, and skeletal muscle cells; inducing expression of acetylcholine receptor in synaptic vesicles during the formation of the neuromuscular junction; stimulating lobuloalveolar budding and milk production in the mammary gland and inducing differentiation of mammary tumor cells; stimulating Schwann cell proliferation; implication in the development of the myocardium such as trabeculation of the developing heart. Binds to ERBB4 and ERBB3. Acts as a ligand for integrins and binds (via EGF domain) to integrins ITGAV:ITGB3 or ITGA6:ITGB4. Its binding to integrins and subsequent ternary complex formation with integrins and ERRB3 are essential for NRG1-ERBB signaling. Induces the phosphorylation and activation of MAPK3/ERK1, MAPK1/ERK2 and AKT1, and ligand-dependent ERBB4 endocytosis is essential for the NRG1-mediated activation of these kinases in neurons. The polypeptide is Pro-neuregulin-1, membrane-bound isoform (Mus musculus (Mouse)).